Here is a 420-residue protein sequence, read N- to C-terminus: Amino acid decarboxylase lolD1 (420 aa).

Residue Lys-62 is modified to N6-(pyridoxal phosphate)lysine. Pyridoxal 5'-phosphate contacts are provided by residues Ser-194, Gly-231, and 266–269 (EPGT). Residue 315–316 (IV) coordinates substrate. Cys-351 functions as the Proton donor; shared with dimeric partner in the catalytic mechanism. Cys-351 is subject to S-nitrosocysteine. Residue Asp-352 participates in substrate binding. Tyr-381 is a pyridoxal 5'-phosphate binding site.

It belongs to the Orn/Lys/Arg decarboxylase class-II family. Homodimer. It depends on pyridoxal 5'-phosphate as a cofactor.

The protein operates within alkaloid biosynthesis. In terms of biological role, amino acid decarboxylase; part of the gene cluster that mediates the biosynthesis of loline alkaloids, potent insecticidal agents composed of a pyrrolizidine ring system and an uncommon ether bridge linking carbons 2 and 7. Lolines are structurally differentiated by the various modifications of the L-amino group and include norloline, loline, N-methylloline, N-acetylloline, N-acetylnorloline, and N-formylloline. The first committed step is the condensation of O-acetyl-L-homoserine (derived from L-aspartic acid) and L-proline, probably catalyzed by the gamma-type pyridoxal 5'-phosphate(PLP)-dependent enzyme lolC, to give the diamino diacid, NACPP. Ensuing cyclization, decarboxylation, and acetylation steps yield 1-exo-acetamidopyrrolizidine (AcAP). LolO is required for installation of the ether bridge upon the pathway intermediate, 1-exo-acetamidopyrrolizidine (AcAP). In sequential 2-oxoglutarate- and O(2)-consuming steps, lolO removes hydrogens from C2 and C7 of AcAP to form both carbon-oxygen bonds in N-acetylnorloline (NANL), the precursor to all other lolines. The enzymes lolD, lolE, lolF and lolT have also been proposed to be involved in the ether-bridge installation. Further processing of the exocyclic moiety of NANL by fungal N-acetamidase (LolN), methyltransferase (LolM), and cytochrome P450 (LolP) enzymes, with occasional involvement of a plant acetyltransferase, generates the other known lolines. LolN transforms NANL to norlonine which is monomethylated and dimethylated to respectively lonine and N-methyllonine (NML) by lolM. LolP catalyzes hydroxylation of the methyl group in N-methylloline (NML) and further oxygenation to N-formylloline (NFL). A plant acetyltransferase is responsible for the acetylation of loline to form N-acetylloline (NAL). LolA might interact with aspartate kinase to prevent feedback inhibition of its activity by these end products and thereby promote production of L-homoserine from L-aspartate. This Epichloe uncinata (Endophyte fungus) protein is Amino acid decarboxylase lolD1.